A 328-amino-acid chain; its full sequence is Olfactory receptor 13A1 (328 aa).

The Extracellular segment spans residues 1–43 (MKLWMESHLIVPETRPSPRMMSNQTLVTEFILQGFSEHPEYRV). N23 carries N-linked (GlcNAc...) asparagine glycosylation. Residues 44–64 (FLFSCFLFLYSGALTGNVLIT) traverse the membrane as a helical segment. The Cytoplasmic portion of the chain corresponds to 65-72 (LAITFNPG). A helical transmembrane segment spans residues 73 to 93 (LHAPMYFFLLNLATMDIICTS). Residues 94-117 (SIMPKALASLVSEESSISYGGCMA) are Extracellular-facing. The cysteines at positions 115 and 207 are disulfide-linked. A helical membrane pass occupies residues 118-138 (QLYFLTWAASSELLLLTVMAY). Over 139-157 (DRYAAICHPLHYSSMMSKV) the chain is Cytoplasmic. A helical transmembrane segment spans residues 158–178 (FCSGLATAVWLLCAVNTAIHT). At 179 to 215 (GLMLRLDFCGPNVIIHFFCEVPPLLLLSCSSTYVNGV) the chain is on the extracellular side. Residues 216 to 235 (MIVLADAFYGIVNFLMTIAS) traverse the membrane as a helical segment. Residues 236-255 (YGFIVSSILKVKTAWGRQKA) lie on the Cytoplasmic side of the membrane. Residues 256-276 (FSTCSSHLTVVCMYYTAVFYA) form a helical membrane-spanning segment. The Extracellular portion of the chain corresponds to 277–289 (YISPVSGYSAGKS). The helical transmembrane segment at 290–310 (KLAGLLYTVLSPTLNPLIYTL) threads the bilayer. At 311–328 (RNKEVKAALRKLFPFFRN) the chain is on the cytoplasmic side.

The protein belongs to the G-protein coupled receptor 1 family.

Its subcellular location is the cell membrane. Its function is as follows. Odorant receptor. This Homo sapiens (Human) protein is Olfactory receptor 13A1 (OR13A1).